The chain runs to 620 residues: Apoptosis regulator MC163R (620 aa).

The helical transmembrane segment at 113–133 threads the bilayer; sequence APLPLLLLPLLLPPMILLFFL.

It is found in the host mitochondrion. The protein resides in the host membrane. Functionally, plays a role in the inhibition of host apoptosis. Prevents host TNF-alpha-induced mitochondrial membrane permeabilization and reduces caspase-3/CASP3 and PARP1 cleavage induced by the intrinsic apoptotic pathway. This is Apoptosis regulator MC163R (MC163R) from Homo sapiens (Human).